Reading from the N-terminus, the 217-residue chain is Insulin-like growth factor 2.L (217 aa).

The signal sequence occupies residues 1-56 (MEQLSCKHRSSSMEAEAQLCRQTESRSTQLPRMSVMRHLFLLSITFLVYTLDSAKA). The tract at residues 57 to 83 (YRPTETLCGGELVDTLQFVCGDRGFYF) is b. 3 disulfide bridges follow: cysteine 64-cysteine 103, cysteine 76-cysteine 116, and cysteine 102-cysteine 107. Residues 84-96 (STNNGRSNRRSNR) form a c region. Positions 97–117 (GIVEECCFRSCDLELLETYCA) are a. The tract at residues 118–123 (KPSKNE) is d. The propeptide at 124-217 (RDVSTAPATA…LQQTSEPSHN (94 aa)) is e peptide.

This sequence belongs to the insulin family.

The protein localises to the secreted. The insulin-like growth factors, isolated from plasma, are structurally and functionally related to insulin but have a much higher growth-promoting activity. Promotes anterior neural development. Acts as a ligand for integrin which is required for IGF2 signaling. The sequence is that of Insulin-like growth factor 2.L from Xenopus laevis (African clawed frog).